A 468-amino-acid chain; its full sequence is 3-isopropylmalate dehydratase large subunit (468 aa).

Residues Cys-349, Cys-409, and Cys-412 each contribute to the [4Fe-4S] cluster site.

The protein belongs to the aconitase/IPM isomerase family. LeuC type 1 subfamily. In terms of assembly, heterodimer of LeuC and LeuD. It depends on [4Fe-4S] cluster as a cofactor.

It catalyses the reaction (2R,3S)-3-isopropylmalate = (2S)-2-isopropylmalate. It functions in the pathway amino-acid biosynthesis; L-leucine biosynthesis; L-leucine from 3-methyl-2-oxobutanoate: step 2/4. Catalyzes the isomerization between 2-isopropylmalate and 3-isopropylmalate, via the formation of 2-isopropylmaleate. This Nitrobacter winogradskyi (strain ATCC 25391 / DSM 10237 / CIP 104748 / NCIMB 11846 / Nb-255) protein is 3-isopropylmalate dehydratase large subunit.